The primary structure comprises 246 residues: O-antigen export system ATP-binding protein RfbB (246 aa).

The ABC transporter domain maps to 22-246 (SGIKDLVFHP…IIELYKQAMA (225 aa)). Residue 63–70 (GRNGAGKS) participates in ATP binding.

Belongs to the ABC transporter superfamily.

Its subcellular location is the cell inner membrane. In terms of biological role, may form an ATP-driven O-antigen export apparatus, in association with RfbA. The chain is O-antigen export system ATP-binding protein RfbB (rfbB) from Klebsiella pneumoniae.